Consider the following 510-residue polypeptide: NAD(P)H-quinone oxidoreductase subunit 2 B, chloroplastic (510 aa).

A run of 13 helical transmembrane segments spans residues 24–44 (LLLF…GLIL), 59–79 (WFYF…LFRW), 99–119 (IFQF…VEYI), 124–144 (MAIT…MFLC), 149–169 (LITI…LSGY), 184–204 (LLMG…LYGL), 229–249 (ISIA…LAPF), 262–284 (TPVV…TRIF), 295–315 (WHLL…LIAI), 323–343 (MLAY…IVGD), 354–374 (YMLF…LFGL), 395–415 (ALSL…AGFF), and 418–438 (LHLF…IGLL).

The protein belongs to the complex I subunit 2 family. In terms of assembly, NDH is composed of at least 16 different subunits, 5 of which are encoded in the nucleus.

Its subcellular location is the plastid. The protein localises to the chloroplast thylakoid membrane. The enzyme catalyses a plastoquinone + NADH + (n+1) H(+)(in) = a plastoquinol + NAD(+) + n H(+)(out). The catalysed reaction is a plastoquinone + NADPH + (n+1) H(+)(in) = a plastoquinol + NADP(+) + n H(+)(out). NDH shuttles electrons from NAD(P)H:plastoquinone, via FMN and iron-sulfur (Fe-S) centers, to quinones in the photosynthetic chain and possibly in a chloroplast respiratory chain. The immediate electron acceptor for the enzyme in this species is believed to be plastoquinone. Couples the redox reaction to proton translocation, and thus conserves the redox energy in a proton gradient. The protein is NAD(P)H-quinone oxidoreductase subunit 2 B, chloroplastic of Lemna minor (Common duckweed).